The primary structure comprises 328 residues: Beta-ketoacyl-[acyl-carrier-protein] synthase III (328 aa).

Catalysis depends on residues Cys122 and His255. Residues 256-260 (QANVR) form an ACP-binding region. Asn285 is a catalytic residue.

The protein belongs to the thiolase-like superfamily. FabH family. Homodimer.

It is found in the cytoplasm. The enzyme catalyses malonyl-[ACP] + acetyl-CoA + H(+) = 3-oxobutanoyl-[ACP] + CO2 + CoA. The protein operates within lipid metabolism; fatty acid biosynthesis. Catalyzes the condensation reaction of fatty acid synthesis by the addition to an acyl acceptor of two carbons from malonyl-ACP. Catalyzes the first condensation reaction which initiates fatty acid synthesis and may therefore play a role in governing the total rate of fatty acid production. Possesses both acetoacetyl-ACP synthase and acetyl transacylase activities. Its substrate specificity determines the biosynthesis of branched-chain and/or straight-chain of fatty acids. The chain is Beta-ketoacyl-[acyl-carrier-protein] synthase III from Bordetella pertussis (strain Tohama I / ATCC BAA-589 / NCTC 13251).